The sequence spans 613 residues: Sulfhydryl oxidase 1 (613 aa).

An N-terminal signal peptide occupies residues 1–30; that stretch reads MTGCGRRSGWLPPLRLLLLPLLLGGPGVGA. Positions 37-157 constitute a Thioredoxin domain; sequence YSASDPLTLL…RERLIDALES (121 aa). Catalysis depends on nucleophile residues Cys-71 and Cys-74. Disulfide bonds link Cys-71–Cys-74 and Cys-102–Cys-111. Residues Asn-131 and Asn-244 are each glycosylated (N-linked (GlcNAc...) asparagine). Cys-394 and Cys-406 are joined by a disulfide. The region spanning 397-504 is the ERV/ALR sulfhydryl oxidase domain; it reads SESHFRGFPC…EDPQFPKVQW (108 aa). Residues Arg-402, Trp-409, and His-413 each contribute to the FAD site. The residue at position 427 (Ser-427) is a Phosphoserine. A disulfide bridge links Cys-450 with Cys-453. Residues Asp-452, His-456, 479-486, Lys-501, and Trp-504 each bind FAD; that span reads WTSHNRVN. A disulfide bridge links Cys-510 with Cys-513.

This sequence belongs to the quiescin-sulfhydryl oxidase (QSOX) family. Monomer. The cofactor is FAD. Post-translationally, N-glycosylated. O-glycosylated on Thr and Ser residues. Detected in endometrium and in uterus glandular epithelial cells (at protein level). Expressed in testis, placenta, pancreas, lung, ovary, endometrium, but not in brain, liver and kidney tissues. Higher expression in epithelial cells.

Its subcellular location is the secreted. It catalyses the reaction 2 R'C(R)SH + O2 = R'C(R)S-S(R)CR' + H2O2. Functionally, catalyzes the oxidation of sulfhydryl groups in peptide and protein thiols to disulfides with the reduction of oxygen to hydrogen peroxide. Plays a role in disulfide bond formation in a variety of extracellular proteins. In fibroblasts, required for normal incorporation of laminin into the extracellular matrix, and thereby for normal cell-cell adhesion and cell migration. The polypeptide is Sulfhydryl oxidase 1 (QSOX1) (Cavia porcellus (Guinea pig)).